A 149-amino-acid chain; its full sequence is Ribonuclease H (149 aa).

Residues 1–141 (MKTVTLFSDG…CDTMAREKAT (141 aa)) form the RNase H type-1 domain. Positions 9, 47, 69, and 133 each coordinate Mg(2+).

It belongs to the RNase H family. In terms of assembly, monomer. Mg(2+) serves as cofactor.

The protein resides in the cytoplasm. It catalyses the reaction Endonucleolytic cleavage to 5'-phosphomonoester.. In terms of biological role, endonuclease that specifically degrades the RNA of RNA-DNA hybrids. This Campylobacter curvus (strain 525.92) protein is Ribonuclease H.